Here is a 360-residue protein sequence, read N- to C-terminus: Holliday junction branch migration complex subunit RuvB (360 aa).

A large ATPase domain (RuvB-L) region spans residues 4-196 (HEEDLDQAEE…FGFTAHLEFY (193 aa)). Residues Leu35, Arg36, Gly77, Lys80, Thr81, Thr82, 143 to 145 (EDF), Arg186, Tyr196, and Arg233 each bind ATP. Mg(2+) is bound at residue Thr81. The segment at 197-267 (EPDELDLIVQ…VAQDALDLYE (71 aa)) is small ATPAse domain (RuvB-S). Residues 270–360 (QLGLDRLDRG…PESDPPLFED (91 aa)) are head domain (RuvB-H). DNA contacts are provided by Arg306, Arg325, and Arg330.

This sequence belongs to the RuvB family. In terms of assembly, homohexamer. Forms an RuvA(8)-RuvB(12)-Holliday junction (HJ) complex. HJ DNA is sandwiched between 2 RuvA tetramers; dsDNA enters through RuvA and exits via RuvB. An RuvB hexamer assembles on each DNA strand where it exits the tetramer. Each RuvB hexamer is contacted by two RuvA subunits (via domain III) on 2 adjacent RuvB subunits; this complex drives branch migration. In the full resolvosome a probable DNA-RuvA(4)-RuvB(12)-RuvC(2) complex forms which resolves the HJ.

It is found in the cytoplasm. It catalyses the reaction ATP + H2O = ADP + phosphate + H(+). Its function is as follows. The RuvA-RuvB-RuvC complex processes Holliday junction (HJ) DNA during genetic recombination and DNA repair, while the RuvA-RuvB complex plays an important role in the rescue of blocked DNA replication forks via replication fork reversal (RFR). RuvA specifically binds to HJ cruciform DNA, conferring on it an open structure. The RuvB hexamer acts as an ATP-dependent pump, pulling dsDNA into and through the RuvAB complex. RuvB forms 2 homohexamers on either side of HJ DNA bound by 1 or 2 RuvA tetramers; 4 subunits per hexamer contact DNA at a time. Coordinated motions by a converter formed by DNA-disengaged RuvB subunits stimulates ATP hydrolysis and nucleotide exchange. Immobilization of the converter enables RuvB to convert the ATP-contained energy into a lever motion, pulling 2 nucleotides of DNA out of the RuvA tetramer per ATP hydrolyzed, thus driving DNA branch migration. The RuvB motors rotate together with the DNA substrate, which together with the progressing nucleotide cycle form the mechanistic basis for DNA recombination by continuous HJ branch migration. Branch migration allows RuvC to scan DNA until it finds its consensus sequence, where it cleaves and resolves cruciform DNA. This chain is Holliday junction branch migration complex subunit RuvB, found in Nocardioides sp. (strain ATCC BAA-499 / JS614).